Here is a 421-residue protein sequence, read N- to C-terminus: Putative B3 domain-containing protein Os08g0333500 (421 aa).

The segment at residues 1-51 (MTVELEKIAGSFFISKGWKTFVHRTGLLSGQYIRFQVLTPSKINVLLFDKK) is a DNA-binding region (TF-B3). The tract at residues 92 to 121 (SHTSNKETSSDSRTESMTDIPSSSDNSGET) is disordered. Positions 95–107 (SNKETSSDSRTES) are enriched in basic and acidic residues. Polar residues predominate over residues 108–121 (MTDIPSSSDNSGET).

The protein resides in the nucleus. This Oryza sativa subsp. japonica (Rice) protein is Putative B3 domain-containing protein Os08g0333500.